The following is a 1074-amino-acid chain: DNA-directed RNA polymerase subunit beta (1074 aa).

The protein belongs to the RNA polymerase beta chain family. In plastids the minimal PEP RNA polymerase catalytic core is composed of four subunits: alpha, beta, beta', and beta''. When a (nuclear-encoded) sigma factor is associated with the core the holoenzyme is formed, which can initiate transcription.

It localises to the plastid. It is found in the chloroplast. The enzyme catalyses RNA(n) + a ribonucleoside 5'-triphosphate = RNA(n+1) + diphosphate. DNA-dependent RNA polymerase catalyzes the transcription of DNA into RNA using the four ribonucleoside triphosphates as substrates. This is DNA-directed RNA polymerase subunit beta from Chara vulgaris (Common stonewort).